A 187-amino-acid polypeptide reads, in one-letter code: MSIKSDRWIRRAAEAGMIEPFEPGQVRTAGGNRIVSYGTSSYGYDVRCADEFKIFTNINSTIVDPKQFDEKSFVDFKGDVCIIPPNSFALARTVEYFRIPRSVLTICLGKSTYARCGIIVNVTPLEPEWEGHVTLEFSNTTPLPAKIYAGEGCAQMLFLESDEVCETSYRDRGGKYQGQRGVTLPRT.

DCTP contacts are provided by residues K110 to R115, T134 to E136, Q155, Y169, and Q179. The active-site Proton donor/acceptor is E136.

It belongs to the dCTP deaminase family. As to quaternary structure, homotrimer.

The catalysed reaction is dCTP + H2O + H(+) = dUTP + NH4(+). It participates in pyrimidine metabolism; dUMP biosynthesis; dUMP from dCTP (dUTP route): step 1/2. Catalyzes the deamination of dCTP to dUTP. In Bordetella bronchiseptica (strain ATCC BAA-588 / NCTC 13252 / RB50) (Alcaligenes bronchisepticus), this protein is dCTP deaminase.